Reading from the N-terminus, the 231-residue chain is UPF0758 protein YsxA (231 aa).

The MPN domain maps to 109 to 231 (VIRSPEDGAN…FVSLKEKGYL (123 aa)). 3 residues coordinate Zn(2+): histidine 180, histidine 182, and aspartate 193. The JAMM motif motif lies at 180 to 193 (HNHPSGDPTPSRED).

It belongs to the UPF0758 family.

This is UPF0758 protein YsxA (ysxA) from Bacillus subtilis (strain 168).